The sequence spans 462 residues: Asparagine--tRNA ligase (462 aa).

It belongs to the class-II aminoacyl-tRNA synthetase family. Homodimer.

Its subcellular location is the cytoplasm. The enzyme catalyses tRNA(Asn) + L-asparagine + ATP = L-asparaginyl-tRNA(Asn) + AMP + diphosphate + H(+). This chain is Asparagine--tRNA ligase, found in Borrelia garinii subsp. bavariensis (strain ATCC BAA-2496 / DSM 23469 / PBi) (Borreliella bavariensis).